Here is a 512-residue protein sequence, read N- to C-terminus: Lysine--tRNA ligase (512 aa).

Glu-408 and Glu-415 together coordinate Mg(2+).

This sequence belongs to the class-II aminoacyl-tRNA synthetase family. As to quaternary structure, homodimer. Requires Mg(2+) as cofactor.

Its subcellular location is the cytoplasm. It catalyses the reaction tRNA(Lys) + L-lysine + ATP = L-lysyl-tRNA(Lys) + AMP + diphosphate. This chain is Lysine--tRNA ligase, found in Prochlorococcus marinus (strain MIT 9215).